A 232-amino-acid chain; its full sequence is Cytochrome c oxidase subunit 2 (232 aa).

Over 1 to 30 the chain is Mitochondrial intermembrane; the sequence is MNNFFQDFNLLFSSSLFSSYMDWFYNFNCS. Residues 31-52 traverse the membrane as a helical segment; that stretch reads LLFGVLSFVSTMFVYLLLSSFY. The Mitochondrial matrix segment spans residues 53-69; the sequence is FKSKKIEYQFGELLCSV. A helical membrane pass occupies residues 70-89; it reads FPTLILVMQMVPSLSLLYYY. Residues 90 to 232 lie on the Mitochondrial intermembrane side of the membrane; that stretch reads GLMNLDSSLT…KSWCVGLLSD (143 aa). Cu cation is bound by residues histidine 164, cysteine 199, glutamate 201, cysteine 203, histidine 207, and methionine 210. Residue glutamate 201 coordinates Mg(2+).

Belongs to the cytochrome c oxidase subunit 2 family. As to quaternary structure, component of the cytochrome c oxidase (complex IV, CIV), a multisubunit enzyme composed of a catalytic core of 3 subunits and several supernumerary subunits. The complex exists as a monomer or a dimer and forms supercomplexes (SCs) in the inner mitochondrial membrane with ubiquinol-cytochrome c oxidoreductase (cytochrome b-c1 complex, complex III, CIII). The cofactor is Cu cation.

It localises to the mitochondrion inner membrane. The catalysed reaction is 4 Fe(II)-[cytochrome c] + O2 + 8 H(+)(in) = 4 Fe(III)-[cytochrome c] + 2 H2O + 4 H(+)(out). Functionally, component of the cytochrome c oxidase, the last enzyme in the mitochondrial electron transport chain which drives oxidative phosphorylation. The respiratory chain contains 3 multisubunit complexes succinate dehydrogenase (complex II, CII), ubiquinol-cytochrome c oxidoreductase (cytochrome b-c1 complex, complex III, CIII) and cytochrome c oxidase (complex IV, CIV), that cooperate to transfer electrons derived from NADH and succinate to molecular oxygen, creating an electrochemical gradient over the inner membrane that drives transmembrane transport and the ATP synthase. Cytochrome c oxidase is the component of the respiratory chain that catalyzes the reduction of oxygen to water. Electrons originating from reduced cytochrome c in the intermembrane space (IMS) are transferred via the dinuclear copper A center (CU(A)) of subunit 2 and heme A of subunit 1 to the active site in subunit 1, a binuclear center (BNC) formed by heme A3 and copper B (CU(B)). The BNC reduces molecular oxygen to 2 water molecules using 4 electrons from cytochrome c in the IMS and 4 protons from the mitochondrial matrix. The protein is Cytochrome c oxidase subunit 2 (COII) of Ascaris suum (Pig roundworm).